A 272-amino-acid polypeptide reads, in one-letter code: Enoyl-[acyl-carrier-protein] reductase [NADH] 1 (272 aa).

Residues Gly-17, Ser-23–Ile-24, Gln-44, Asp-68–Val-69, and Ile-96 contribute to the NAD(+) site. Residues Tyr-149 and Tyr-159 each act as proton acceptor in the active site. NAD(+) contacts are provided by residues Lys-166 and Ile-195–Ala-199.

The protein belongs to the short-chain dehydrogenases/reductases (SDR) family. FabI subfamily.

The protein localises to the cell inner membrane. The enzyme catalyses a 2,3-saturated acyl-[ACP] + NAD(+) = a (2E)-enoyl-[ACP] + NADH + H(+). It functions in the pathway lipid metabolism; fatty acid biosynthesis. This Rhizobium meliloti (strain 1021) (Ensifer meliloti) protein is Enoyl-[acyl-carrier-protein] reductase [NADH] 1 (fabI1).